A 66-amino-acid polypeptide reads, in one-letter code: Sodium/potassium-transporting ATPase subunit gamma (66 aa).

A helical transmembrane segment spans residues 29 to 46 (GGLIFAGLAFIVGLLILL).

It belongs to the FXYD family. In terms of assembly, regulatory subunit of the sodium/potassium-transporting ATPase which is composed of a catalytic alpha subunit, an auxiliary non-catalytic beta subunit and an additional regulatory subunit. Expressed in the distal convoluted tubule in the kidney. Found on basolateral membranes of nephron epithelial cells.

Its subcellular location is the membrane. In terms of biological role, may be involved in forming the receptor site for cardiac glycoside binding or may modulate the transport function of the sodium ATPase. This is Sodium/potassium-transporting ATPase subunit gamma (FXYD2) from Homo sapiens (Human).